The primary structure comprises 1703 residues: Protein TIC 214 (1703 aa).

The next 6 helical transmembrane spans lie at 39 to 61 (YYGFLTALPIGPSQILSIRTFFL), 67 to 87 (GIICILGSMMGQFVILLSIYC), 90 to 110 (LYVMLVKPHLMTLLVIPYMFY), 138 to 158 (LLLDSFIFQLLNPILLPNPVL), 174 to 194 (FFLTSSLLGWLCGHILFINSI), and 220 to 240 (FSILISITFFLYLGRSPVPLI). 2 disordered regions span residues 615–643 (GPRKGKLEDKEKEKEKAAQTQTEVKKERE) and 1431–1494 (TKEP…WKSK). Residues 618–660 (KGKLEDKEKEKEKAAQTQTEVKKEREKEKEERVIKRFQNQSDF) adopt a coiled-coil conformation. Over residues 619 to 643 (GKLEDKEKEKEKAAQTQTEVKKERE) the composition is skewed to basic and acidic residues.

It belongs to the TIC214 family. Part of the Tic complex.

The protein localises to the plastid. The protein resides in the chloroplast inner membrane. Involved in protein precursor import into chloroplasts. May be part of an intermediate translocation complex acting as a protein-conducting channel at the inner envelope. This chain is Protein TIC 214, found in Psilotum nudum (Whisk fern).